The primary structure comprises 328 residues: Cell division protein ZipA (328 aa).

Residues Met1–Asn4 lie on the Periplasmic side of the membrane. The helical transmembrane segment at Thr5–Ser25 threads the bilayer. The Cytoplasmic segment spans residues Asn26–Val328. Residues Ser44–Leu82 form a disordered region. The span at Gln57–Val67 shows a compositional bias: polar residues.

Belongs to the ZipA family. Interacts with FtsZ via their C-terminal domains.

The protein localises to the cell inner membrane. In terms of biological role, essential cell division protein that stabilizes the FtsZ protofilaments by cross-linking them and that serves as a cytoplasmic membrane anchor for the Z ring. Also required for the recruitment to the septal ring of downstream cell division proteins. This Haemophilus influenzae (strain ATCC 51907 / DSM 11121 / KW20 / Rd) protein is Cell division protein ZipA.